A 633-amino-acid polypeptide reads, in one-letter code: CDK5 and ABL1 enzyme substrate 1 (633 aa).

Over residues 1–29 (MAAAAAAATTAACSSGSAGTDAAGASGLQ) the composition is skewed to low complexity. Residues 1–99 (MAAAAAAATT…EGGAAKPGAG (99 aa)) are disordered. The interaction with TDRD7 stretch occupies residues 1 to 109 (MAAAAAAATT…GACGARTRFS (109 aa)). Over residues 51–61 (PPRKPRMDPRR) the composition is skewed to basic and acidic residues. Phosphoserine is present on residues serine 168 and serine 287. The interaction with CDK3 stretch occupies residues 179–492 (QWQPPRPAPL…TTVIDYVKPS (314 aa)). Phosphoserine; by CDK2 and CDK3 is present on serine 313. Residue threonine 415 is modified to Phosphothreonine.

The protein belongs to the cyclin family. Found in a complex with p53/TP53. Found in a number of complexes with CDK2, CDK3, CDK5, ABL1, TDRD7, CDK17, CCNA1, CCNE1 and TP73. Interacts with CDK2, CDK3, CDK5, ABL1 and TDRD7. In terms of processing, phosphorylated on Ser-313 by CCNE1/CDK3. Phosphorylated on serine/threonine residues by CDK5 and on tyrosine residues by ABL1. Also phosphorylated in vitro by CCNA1/CDK2, CCNE1/CDK2, CCNA1/CDK3 and CCNE1/CDK3. In terms of tissue distribution, expressed in breast, pancreas, colon, head and neck (at protein level). Strongly decreased in more than half of cases of atypical endometrial hyperplasia and in more than 90% of endometrial cancers.

It is found in the nucleus. Its subcellular location is the cytoplasm. Cyclin-dependent kinase binding protein. Enhances cyclin-dependent kinase tyrosine phosphorylation by nonreceptor tyrosine kinases, such as that of CDK5 by activated ABL1, which leads to increased CDK5 activity and is critical for neuronal development, and that of CDK2 by WEE1, which leads to decreased CDK2 activity and growth inhibition. Positively affects neuronal outgrowth. Plays a role as a regulator for p53/p73-induced cell death. In Homo sapiens (Human), this protein is CDK5 and ABL1 enzyme substrate 1 (CABLES1).